A 220-amino-acid polypeptide reads, in one-letter code: Orotidine 5'-phosphate decarboxylase (220 aa).

Substrate contacts are provided by residues Asp-12, Lys-34, 60–69 (DFKVADIPNT), Ser-117, 170–180 (PGVGAQGGKAS), Gly-193, and Arg-194. Residue Lys-62 is the Proton donor of the active site.

Belongs to the OMP decarboxylase family. Type 1 subfamily. As to quaternary structure, homodimer.

The catalysed reaction is orotidine 5'-phosphate + H(+) = UMP + CO2. It participates in pyrimidine metabolism; UMP biosynthesis via de novo pathway; UMP from orotate: step 2/2. In terms of biological role, catalyzes the decarboxylation of orotidine 5'-monophosphate (OMP) to uridine 5'-monophosphate (UMP). This is Orotidine 5'-phosphate decarboxylase from Methanosarcina mazei (strain ATCC BAA-159 / DSM 3647 / Goe1 / Go1 / JCM 11833 / OCM 88) (Methanosarcina frisia).